The chain runs to 81 residues: Sulfur carrier protein TusA (81 aa).

Catalysis depends on Cys-19, which acts as the Cysteine persulfide intermediate.

It belongs to the sulfur carrier protein TusA family. In terms of assembly, interacts with IscS.

Its subcellular location is the cytoplasm. It participates in tRNA modification. Sulfur carrier protein involved in sulfur trafficking in the cell. Part of a sulfur-relay system required for 2-thiolation during synthesis of 2-thiouridine of the modified wobble base 5-methylaminomethyl-2-thiouridine (mnm(5)s(2)U) in tRNA. Interacts with IscS and stimulates its cysteine desulfurase activity. Accepts an activated sulfur from IscS, which is then transferred to TusD, and thus determines the direction of sulfur flow from IscS to 2-thiouridine formation. Also appears to be involved in sulfur transfer for the biosynthesis of molybdopterin. The protein is Sulfur carrier protein TusA of Shigella boydii serotype 18 (strain CDC 3083-94 / BS512).